The sequence spans 263 residues: Acyl-[acyl-carrier-protein]--UDP-N-acetylglucosamine O-acyltransferase (263 aa).

Belongs to the transferase hexapeptide repeat family. LpxA subfamily. In terms of assembly, homotrimer.

The protein resides in the cytoplasm. It catalyses the reaction a (3R)-hydroxyacyl-[ACP] + UDP-N-acetyl-alpha-D-glucosamine = a UDP-3-O-[(3R)-3-hydroxyacyl]-N-acetyl-alpha-D-glucosamine + holo-[ACP]. It functions in the pathway glycolipid biosynthesis; lipid IV(A) biosynthesis; lipid IV(A) from (3R)-3-hydroxytetradecanoyl-[acyl-carrier-protein] and UDP-N-acetyl-alpha-D-glucosamine: step 1/6. Functionally, involved in the biosynthesis of lipid A, a phosphorylated glycolipid that anchors the lipopolysaccharide to the outer membrane of the cell. This chain is Acyl-[acyl-carrier-protein]--UDP-N-acetylglucosamine O-acyltransferase, found in Campylobacter jejuni subsp. doylei (strain ATCC BAA-1458 / RM4099 / 269.97).